Here is a 519-residue protein sequence, read N- to C-terminus: Zinc finger protein 692 (519 aa).

Residues 123–314 (GPSLSPTPSE…PAWDEDTAQI (192 aa)) form a disordered region. Polar residues predominate over residues 145 to 155 (RSWCSEATSGQ). Ser-162 carries the phosphoserine modification. Residues 164–173 (HDERTQEARL) show a composition bias toward basic and acidic residues. Over residues 177–187 (VGPPPETFPPP) the composition is skewed to pro residues. Acidic residues predominate over residues 188–206 (GEEEGEEEEDNDEDEEEML). At Ser-231 the chain carries Phosphoserine. Positions 247 to 266 (AALSSPLAVPALSASSLSSR) are enriched in low complexity. Residues 277 to 303 (PQLSRTPQAAQQTEALASTGSQAQSAP) show a composition bias toward polar residues. C2H2-type zinc fingers lie at residues 328–353 (MPCDFPGCGRIFSNRQYLNHHKKYQH), 359–383 (FSCPEPACGKSFNFKKHLKEHMKLH), 389–411 (YICEFCARSFRTSSNLVIHRRIH), 417–439 (LQCEICGFTCRQKASLNWHQRKH), and 448–471 (FPCEFCGKRFEKPDSVAAHRSKSH). The segment at 469 to 519 (KSHPALLLAPQESPSGPLEPCPSISAPGPLGSSEGSRPSASPQAPTLLPQQ) is disordered. Ser-470 is subject to Phosphoserine; by AMPK. A compositionally biased stretch (polar residues) spans 501–519 (SEGSRPSASPQAPTLLPQQ).

The protein belongs to the krueppel C2H2-type zinc-finger protein family. Post-translationally, phosphorylation at Ser-470 results in loss of DNA-binding activity. Ubiquitous. Highly expressed in brain, thymus and spleen.

It is found in the nucleus. May act as an transcriptional repressor for PCK1 gene expression, in turn may participate in the hepatic gluconeogenesis regulation through the activated AMPK signaling pathway. This chain is Zinc finger protein 692 (ZNF692), found in Homo sapiens (Human).